Consider the following 526-residue polypeptide: Alpha-N-acetylgalactosaminide alpha-2,6-sialyltransferase 1 (526 aa).

Over 1-12 the chain is Cytoplasmic; that stretch reads MTRYCRGLSQRQ. A helical; Signal-anchor for type II membrane protein membrane pass occupies residues 13-33; the sequence is AFLLLTVLALLFILLFVVKDP. Residues 34–526 are Lumenal-facing; sequence RAKDSRCQFI…QRPQSDKAKN (493 aa). The interval 49 to 182 is disordered; it reads SAQENQQKAE…TRRRQRLKAS (134 aa). A compositionally biased stretch (basic and acidic residues) spans 81–106; sequence KDLKKQEREAVQGEQAEGKEKRKLET. The segment covering 161–171 has biased composition (polar residues); that stretch reads ATKSPASSPHP. 5 N-linked (GlcNAc...) asparagine glycosylation sites follow: Asn206, Asn228, Asn259, Asn303, and Asn388. 2 cysteine pairs are disulfide-bonded: Cys207-Cys290 and Cys293-Cys461.

Belongs to the glycosyltransferase 29 family. Glycosylated; autosialylated. As to expression, submaxillary gland, mammary gland, spleen and colon.

It is found in the golgi apparatus membrane. The enzyme catalyses a beta-D-galactosyl-(1-&gt;3)-N-acetyl-alpha-D-galactosaminyl derivative + CMP-N-acetyl-beta-neuraminate = a beta-D-galactosyl-(1-&gt;3)-[N-acetyl-alpha-neuraminyl-(2-&gt;6)]-N-acetyl-alpha-D-galactosaminyl derivative + CMP + H(+). The catalysed reaction is a 3-O-[N-acetyl-alpha-D-galactosaminyl]-L-seryl-[protein] + CMP-N-acetyl-beta-neuraminate = a 3-O-[N-acetyl-alpha-neuraminosyl-(2-&gt;6)-N-acetyl-alpha-D-galactosaminyl]-L-seryl-[protein] + CMP + H(+). It catalyses the reaction a 3-O-[N-acetyl-alpha-D-galactosaminyl]-L-threonyl-[protein] + CMP-N-acetyl-beta-neuraminate = a 3-O-[N-acetyl-alpha-neuraminosyl-(2-&gt;6)-N-acetyl-alpha-D-galactosaminyl]-L-threonyl-[protein] + CMP + H(+). It carries out the reaction a 3-O-[beta-D-galactosyl-(1-&gt;3)-N-acetyl-alpha-D-galactosaminyl]-L-seryl-[protein] + CMP-N-acetyl-beta-neuraminate = a 3-O-{beta-D-galactosyl-(1-&gt;3)-[N-acetyl-alpha-neuraminosyl-(2-&gt;6)]-N-acetyl-alpha-D-galactosaminyl}-L-seryl-[protein] + CMP + H(+). The enzyme catalyses a 3-O-[beta-D-galactosyl-(1-&gt;3)-N-acetyl-alpha-D-galactosaminyl]-L-threonyl-[protein] + CMP-N-acetyl-beta-neuraminate = a 3-O-{beta-D-galactosyl-(1-&gt;3)-[N-acetyl-alpha-neuraminosyl-(2-&gt;6)]-N-acetyl-alpha-D-galactosaminyl}-L-threonyl-[protein] + CMP + H(+). The catalysed reaction is a 3-O-[N-acetyl-alpha-neuraminyl-(2-&gt;3)-beta-D-galactosyl-(1-&gt;3)-N-acetyl-alpha-D-galactosaminyl]-L-threonyl-[protein] + CMP-N-acetyl-beta-neuraminate = a 3-O-{alpha-Neu5Ac-(2-&gt;3)-beta-D-Gal-(1-&gt;3)-[alpha-Neu5Ac-(2-&gt;6)]-alpha-D-GalNAc}-L-threonyl-[protein] + CMP + H(+). It functions in the pathway protein modification; protein glycosylation. In terms of biological role, protein sialyltransferase specifically expressed in goblet cells that plays a key role in intestinal host-commensal homeostasis. Conjugates sialic acid with an alpha-2-6 linkage to N-acetylgalactosamine (GalNAc) glycan chains linked to serine or threonine in glycoproteins. Catalyzes the formation of the sialyl-Tn (S-Tn) antigen, an antigen found in intestinal goblet cells. Protein sialylation in globlet cells is essential for mucus integrity and is required to protect the intestinal mucus against excessive bacterial proteolytic degradation. The polypeptide is Alpha-N-acetylgalactosaminide alpha-2,6-sialyltransferase 1 (Mus musculus (Mouse)).